The sequence spans 126 residues: Chorion class B protein M1768 (126 aa).

The left arm stretch occupies residues 1–17 (YGGLGYGGLGGGCGRGF). Residues 18-86 (SGGGLPVATA…GNGAVGITRE (69 aa)) are central domain. A right arm (Gly-rich tandem repeats) region spans residues 87–126 (GGFGYGAGYGDGYGLGFGGYGGGYGLGYGGYGGCGCSWGY).

Belongs to the chorion protein family.

In terms of biological role, this protein is one of many from the eggshell of the silk moth. In Bombyx mori (Silk moth), this protein is Chorion class B protein M1768.